The chain runs to 207 residues: MNPTSFIYDKPPPPPIINKPFEQTNSSASLTQKNSSSETENVGRHGKRRMDQDLSFKPTKRGSGRGRGRSFRGGSHAGNTRGACAVDGIEYLKRRNISINTPEEIEAWIQERKKNWPTESNIRSKQEKEKVMENLGAADTSQSIDAQPTPSQHPLAHHEPHEKRGPPKKKSLYTKLLNTQLEQENIFFLQFMKLYLKKMGMVVKPVS.

Disordered stretches follow at residues 1 to 81 (MNPT…GNTR) and 140 to 169 (TSQS…PPKK). The segment covering 21–40 (FEQTNSSASLTQKNSSSETE) has biased composition (polar residues). Residues 58–70 (PTKRGSGRGRGRS) are compositionally biased toward basic residues. The span at 140–152 (TSQSIDAQPTPSQ) shows a compositional bias: polar residues. Positions 156 to 165 (AHHEPHEKRG) are enriched in basic and acidic residues.

The protein localises to the nucleus. It localises to the nucleolus. This is an uncharacterized protein from Schizosaccharomyces pombe (strain 972 / ATCC 24843) (Fission yeast).